The following is a 382-amino-acid chain: Alanine racemase 1 (382 aa).

The active-site Proton acceptor; specific for D-alanine is the Lys-39. At Lys-39 the chain carries N6-(pyridoxal phosphate)lysine. Residue Arg-138 participates in substrate binding. Residue Tyr-265 is the Proton acceptor; specific for L-alanine of the active site. Met-312 provides a ligand contact to substrate.

The protein belongs to the alanine racemase family. Pyridoxal 5'-phosphate is required as a cofactor.

The enzyme catalyses L-alanine = D-alanine. Its pathway is amino-acid biosynthesis; D-alanine biosynthesis; D-alanine from L-alanine: step 1/1. Its function is as follows. Catalyzes the interconversion of L-alanine and D-alanine. May also act on other amino acids. This is Alanine racemase 1 (alr1) from Staphylococcus aureus (strain N315).